The chain runs to 250 residues: Phosphonates import ATP-binding protein PhnC (250 aa).

Positions 2-247 constitute an ABC transporter domain; that stretch reads IVFNNVNKVW…KLDAQAMKKI (246 aa). 35–42 is an ATP binding site; that stretch reads GLSGAGKT.

The protein belongs to the ABC transporter superfamily. Phosphonates importer (TC 3.A.1.9.1) family. As to quaternary structure, the complex is composed of two ATP-binding proteins (PhnC), two transmembrane proteins (PhnE) and a solute-binding protein (PhnD).

It is found in the cell membrane. The catalysed reaction is phosphonate(out) + ATP + H2O = phosphonate(in) + ADP + phosphate + H(+). In terms of biological role, part of the ABC transporter complex PhnCDE involved in phosphonates import. Responsible for energy coupling to the transport system. This is Phosphonates import ATP-binding protein PhnC from Mycoplasma mycoides subsp. mycoides SC (strain CCUG 32753 / NCTC 10114 / PG1).